Reading from the N-terminus, the 166-residue chain is PTS system glucose-specific EIIA component (166 aa).

Positions 34–138 constitute a PTS EIIA type-1 domain; sequence DPVFAQKMMG…SVISPIIITN (105 aa). Positions 71 and 86 each coordinate Zn(2+). The active-site Tele-phosphohistidine intermediate; for EIIA activity is His86. His86 carries the post-translational modification Phosphohistidine; by HPr.

Heterodimer with glycerol kinase (glpk). Zn(2+) serves as cofactor.

Its subcellular location is the cytoplasm. In terms of biological role, the phosphoenolpyruvate-dependent sugar phosphotransferase system (sugar PTS), a major carbohydrate active transport system, catalyzes the phosphorylation of incoming sugar substrates concomitantly with their translocation across the cell membrane. The enzyme II complex composed of PtsG and Crr is involved in glucose transport. The chain is PTS system glucose-specific EIIA component (crr) from Staphylococcus aureus (strain COL).